Consider the following 629-residue polypeptide: tRNA uridine 5-carboxymethylaminomethyl modification enzyme MnmG (629 aa).

FAD is bound by residues 13 to 18 (GGGHAG), valine 125, and serine 180. 273–287 (GPRYCPSIEDKVMRF) serves as a coordination point for NAD(+). Glutamine 370 provides a ligand contact to FAD.

It belongs to the MnmG family. Homodimer. Heterotetramer of two MnmE and two MnmG subunits. FAD serves as cofactor.

It is found in the cytoplasm. NAD-binding protein involved in the addition of a carboxymethylaminomethyl (cmnm) group at the wobble position (U34) of certain tRNAs, forming tRNA-cmnm(5)s(2)U34. This Escherichia coli O127:H6 (strain E2348/69 / EPEC) protein is tRNA uridine 5-carboxymethylaminomethyl modification enzyme MnmG.